The chain runs to 397 residues: Argininosuccinate synthase (397 aa).

Residue 8-16 (AYSGGLDTS) participates in ATP binding. The L-citrulline site is built by Y86 and S91. G116 is a binding site for ATP. L-aspartate contacts are provided by T118, N122, and D123. N122 serves as a coordination point for L-citrulline. L-citrulline-binding residues include R126, S175, S184, E260, and Y272.

The protein belongs to the argininosuccinate synthase family. Type 1 subfamily. As to quaternary structure, homotetramer.

It localises to the cytoplasm. It catalyses the reaction L-citrulline + L-aspartate + ATP = 2-(N(omega)-L-arginino)succinate + AMP + diphosphate + H(+). The protein operates within amino-acid biosynthesis; L-arginine biosynthesis; L-arginine from L-ornithine and carbamoyl phosphate: step 2/3. The polypeptide is Argininosuccinate synthase (Clostridium botulinum (strain Langeland / NCTC 10281 / Type F)).